A 514-amino-acid polypeptide reads, in one-letter code: 2,3-bisphosphoglycerate-independent phosphoglycerate mutase (514 aa).

2 residues coordinate Mn(2+): aspartate 14 and serine 64. Catalysis depends on serine 64, which acts as the Phosphoserine intermediate. Substrate-binding positions include histidine 125, 155-156, arginine 187, arginine 193, 263-266, and lysine 336; these read RD and RADR. The Mn(2+) site is built by aspartate 403, histidine 407, aspartate 444, histidine 445, and histidine 463.

The protein belongs to the BPG-independent phosphoglycerate mutase family. As to quaternary structure, monomer. Mn(2+) is required as a cofactor.

The catalysed reaction is (2R)-2-phosphoglycerate = (2R)-3-phosphoglycerate. The protein operates within carbohydrate degradation; glycolysis; pyruvate from D-glyceraldehyde 3-phosphate: step 3/5. With respect to regulation, insensitive to vanadate. Its function is as follows. Catalyzes the interconversion of 2-phosphoglycerate (2-PGA) and 3-phosphoglycerate (3-PGA). The sequence is that of 2,3-bisphosphoglycerate-independent phosphoglycerate mutase from Escherichia coli (strain K12).